Reading from the N-terminus, the 35-residue chain is Mu-theraphotoxin-Pm1a (35 aa).

3 cysteine pairs are disulfide-bonded: Cys3–Cys17, Cys10–Cys22, and Cys16–Cys29. The residue at position 35 (Phe35) is a Phenylalanine amide.

The protein belongs to the neurotoxin 10 (Hwtx-1) family. 62 (Vatx) subfamily. As to expression, expressed by the venom gland.

It is found in the secreted. Gating-modifier toxin with weak activity on Nav1.7/SCN9A and Nav1.8/SCN10A. Inhibits Nav1.7/SCN9A peak current (IC(50)=334 nM) and shifts the voltage dependence of activation to more depolarised membrane potentials. Shows 21% peak current inhibition (at 10 uM) on Nav1.8/SCN10A sodium channels. The chain is Mu-theraphotoxin-Pm1a from Poecilotheria metallica (Metallic blue ornamental tree spider).